Here is a 152-residue protein sequence, read N- to C-terminus: Antiholin-like protein LrgA (152 aa).

A run of 4 helical transmembrane segments spans residues 23–43, 45–65, 77–97, and 108–128; these read YSIF…KIIE, FMPI…IALC, VGTA…ISVI, and ILII…TGFS.

The protein belongs to the CidA/LrgA family. LrgA subfamily.

The protein resides in the cell membrane. In terms of biological role, inhibits the expression or activity of extracellular murein hydrolases by interacting, possibly with LrgB, with the holin-like proteins CidA and/or CidB. The LrgAB and CidAB proteins may affect the proton motive force of the membrane. May be involved in programmed cell death (PCD), possibly triggering PCD in response to antibiotics and environmental stresses. The protein is Antiholin-like protein LrgA of Staphylococcus epidermidis (strain ATCC 12228 / FDA PCI 1200).